A 292-amino-acid chain; its full sequence is Xanthine dehydrogenase FAD-binding subunit (292 aa).

The region spanning 1–176 (MFDFASYHRA…VAFHFPPQPK (176 aa)) is the FAD-binding PCMH-type domain. FAD-binding positions include 27-34 (KLLAGGTD), 109-113 (ATYGG), isoleucine 165, and phenylalanine 184.

Heterotrimer of XdhA, XdhB and XdhC. Requires FAD as cofactor.

It catalyses the reaction xanthine + NAD(+) + H2O = urate + NADH + H(+). It carries out the reaction hypoxanthine + NAD(+) + H2O = xanthine + NADH + H(+). It functions in the pathway purine metabolism; hypoxanthine degradation; urate from hypoxanthine: step 1/2. It participates in purine metabolism; hypoxanthine degradation; urate from hypoxanthine: step 2/2. Presumed to be a dehydrogenase, but possibly an oxidase. Participates in limited purine salvage (requires aspartate) but does not support aerobic growth on purines as the sole carbon source (purine catabolism). The protein is Xanthine dehydrogenase FAD-binding subunit (xdhB) of Escherichia coli O157:H7.